We begin with the raw amino-acid sequence, 223 residues long: Small heat shock protein hspI, mitochondrial (223 aa).

The N-terminal 23 residues, 1–23 (MYKLSKTTPFFFRRAFLCGRRGG), are a transit peptide targeting the mitochondrion. Residues 109-223 (KTRGFRSPKT…YVKSTTINVQ (115 aa)) enclose the sHSP domain.

The protein belongs to the small heat shock protein (HSP20) family.

It is found in the mitochondrion. This chain is Small heat shock protein hspI, mitochondrial (hspI), found in Dictyostelium discoideum (Social amoeba).